Consider the following 154-residue polypeptide: 3-dehydroquinate dehydratase (154 aa).

Catalysis depends on tyrosine 26, which acts as the Proton acceptor. Substrate-binding residues include asparagine 77, histidine 83, and aspartate 90. Histidine 103 functions as the Proton donor in the catalytic mechanism. Residues 104 to 105 and arginine 114 each bind substrate; that span reads IS.

It belongs to the type-II 3-dehydroquinase family. In terms of assembly, homododecamer.

The catalysed reaction is 3-dehydroquinate = 3-dehydroshikimate + H2O. The protein operates within metabolic intermediate biosynthesis; chorismate biosynthesis; chorismate from D-erythrose 4-phosphate and phosphoenolpyruvate: step 3/7. Functionally, catalyzes a trans-dehydration via an enolate intermediate. This is 3-dehydroquinate dehydratase from Buchnera aphidicola subsp. Baizongia pistaciae (strain Bp).